We begin with the raw amino-acid sequence, 1006 residues long: MAEQESLEFGKADFVLMDTVSMPEFMANLRLRFEKGRIYTFIGEVVVSVNPYKALNIYGRDTIEQYKGRELYERPPHLFAIADAAYKAMKRRSKDTCIVISGESGAGKTEASKYIMQYIAAITNPSQRAEVERVKNMLLKSNCVLEAFGNAKTNRNDNSSRFGKYMDINFDFKGDPIGGHINNYLLEKSRVIVQQPGERSFHSFYQLLQGGSEQMLRSLHLQKSLSSYNYIHVGAQLKSSINDAAEFKVVADAMKVIGFKPEETQTVYKILAAILHLGNLKFMVDGDTPLIENGKVVSIIAELLSTKTDMVEKALLYRTVATGRDIIDKQHTEQEASYGRDAFAKAIYERLFCWIVTRINDIIEVKNYDTTIHGKNTVIGVLDIYGFEIFDNNSFEQFCINYCNEKLQQLFIQLVLKQEQEEYQREGIPWKHIDYFNNQIIVDLVEQQHKGIIAILDDACMNVGKVTDEMFLEALNSKLGKHGHFSSRKLCASDKILEFDRDFRIRHYAGDVVYSVIGFIDKNKDTLFQDFKRLLYNSSNPVLKNMWPEGKLSITEVTKRPLTAATLFKNSMIALVDNLASKEPYYVRCIKPNDKKSPQIFDDERCRHQVEYLGLLENVRVRRAGFAFRQTYEKFLHRYKMISEFTWPNHDLPSDKEAVKKLIEHCGFQDDVAYGKTKIFIRTPRTLFTLEELRAQMLIRIVLFLQKVWRGTLARMRYKRTKAALTIIRYYRHYKVKSYIQEVARRFHGVKTMKDHGKHVKWPTPPKVLRRFEEALQAIFNRWRASQLIKSLPASDLPQVRAKVAAMEMLKGQRADLGLQRAWEGNYLASKPDTPQTSGTFVPVANELKRKDKYMNVLFSCHVRKVNRFSKVEDRAIFVTDRHLYKMDPTKQYKVMKTIPLYNLTGLSVSNGKDQLVVFHTKDNKDLIVCLFSKQPTHESRIGELVGVLVNHFKSEKRHLQVNVTNPVQCSLHGKKCTVSVETRLNQPEPDFTKNRSGFILSVPGN.

Position 2 is an N-acetylalanine (alanine 2). The Myosin motor domain maps to phenylalanine 9–alanine 695. Glycine 102 to threonine 109 contacts ATP. Serine 200 is modified (phosphoserine). Position 536 is a phosphotyrosine (tyrosine 536). The actin-binding stretch occupies residues methionine 572 to aspartate 594. 2 IQ domains span residues isoleucine 699–lysine 719 and threonine 721–glutamine 741. A TH1 domain is found at glycine 812 to glycine 1005.

The protein belongs to the TRAFAC class myosin-kinesin ATPase superfamily. Myosin family. Interacts (via the two IQ motifs) with calmodulin. Binds an additional calmodulin chain via a third, C-terminal region. Interacts with F-actin.

It localises to the cytoplasm. The protein localises to the perikaryon. Its subcellular location is the cell projection. The protein resides in the dendrite. It is found in the early endosome. It localises to the cell cortex. Unconventional myosin that functions as actin-based motor protein with ATPase activity. Plays a role in endosomal protein trafficking, and especially in the transfer of cargo proteins from early to recycling endosomes. Required for normal planar cell polarity in ciliated tracheal cells, for normal rotational polarity of cilia, and for coordinated, unidirectional ciliary movement in the trachea. Required for normal, polarized cilia organization in brain ependymal epithelial cells. The protein is Unconventional myosin-Id (MYO1D) of Canis lupus familiaris (Dog).